The primary structure comprises 152 residues: Small ribosomal subunit protein uS13 (152 aa).

The protein belongs to the universal ribosomal protein uS13 family. As to quaternary structure, component of the small ribosomal subunit.

Its subcellular location is the cytoplasm. Component of the small ribosomal subunit. The ribosome is a large ribonucleoprotein complex responsible for the synthesis of proteins in the cell. Plays an essential role in early embryonic development. This is Small ribosomal subunit protein uS13 (rps18) from Danio rerio (Zebrafish).